The chain runs to 333 residues: Holliday junction branch migration complex subunit RuvB (333 aa).

The tract at residues 1–182 is large ATPase domain (RuvB-L); the sequence is MDERLLSGES…FGVLSRLEYY (182 aa). Residues Leu-21, Arg-22, Gly-63, Lys-66, Thr-67, Thr-68, 129-131, Arg-172, Tyr-182, and Arg-219 contribute to the ATP site; that span reads EDF. Residue Thr-67 coordinates Mg(2+). The small ATPAse domain (RuvB-S) stretch occupies residues 183 to 253; the sequence is TVDQLSAIVE…ITQMALELLQ (71 aa). The head domain (RuvB-H) stretch occupies residues 256–333; sequence KLGLDHIDHK…EHFGMEMPKV (78 aa). Residues Arg-311 and Arg-316 each contribute to the DNA site.

Belongs to the RuvB family. As to quaternary structure, homohexamer. Forms an RuvA(8)-RuvB(12)-Holliday junction (HJ) complex. HJ DNA is sandwiched between 2 RuvA tetramers; dsDNA enters through RuvA and exits via RuvB. An RuvB hexamer assembles on each DNA strand where it exits the tetramer. Each RuvB hexamer is contacted by two RuvA subunits (via domain III) on 2 adjacent RuvB subunits; this complex drives branch migration. In the full resolvosome a probable DNA-RuvA(4)-RuvB(12)-RuvC(2) complex forms which resolves the HJ.

It is found in the cytoplasm. The enzyme catalyses ATP + H2O = ADP + phosphate + H(+). The RuvA-RuvB-RuvC complex processes Holliday junction (HJ) DNA during genetic recombination and DNA repair, while the RuvA-RuvB complex plays an important role in the rescue of blocked DNA replication forks via replication fork reversal (RFR). RuvA specifically binds to HJ cruciform DNA, conferring on it an open structure. The RuvB hexamer acts as an ATP-dependent pump, pulling dsDNA into and through the RuvAB complex. RuvB forms 2 homohexamers on either side of HJ DNA bound by 1 or 2 RuvA tetramers; 4 subunits per hexamer contact DNA at a time. Coordinated motions by a converter formed by DNA-disengaged RuvB subunits stimulates ATP hydrolysis and nucleotide exchange. Immobilization of the converter enables RuvB to convert the ATP-contained energy into a lever motion, pulling 2 nucleotides of DNA out of the RuvA tetramer per ATP hydrolyzed, thus driving DNA branch migration. The RuvB motors rotate together with the DNA substrate, which together with the progressing nucleotide cycle form the mechanistic basis for DNA recombination by continuous HJ branch migration. Branch migration allows RuvC to scan DNA until it finds its consensus sequence, where it cleaves and resolves cruciform DNA. The protein is Holliday junction branch migration complex subunit RuvB of Bacillus cereus (strain 03BB102).